The primary structure comprises 96 residues: Co-chaperonin GroES (96 aa).

This sequence belongs to the GroES chaperonin family. As to quaternary structure, heptamer of 7 subunits arranged in a ring. Interacts with the chaperonin GroEL.

The protein localises to the cytoplasm. Functionally, together with the chaperonin GroEL, plays an essential role in assisting protein folding. The GroEL-GroES system forms a nano-cage that allows encapsulation of the non-native substrate proteins and provides a physical environment optimized to promote and accelerate protein folding. GroES binds to the apical surface of the GroEL ring, thereby capping the opening of the GroEL channel. In Aromatoleum aromaticum (strain DSM 19018 / LMG 30748 / EbN1) (Azoarcus sp. (strain EbN1)), this protein is Co-chaperonin GroES.